The following is a 437-amino-acid chain: O-methyltransferase 3 (437 aa).

A disordered region spans residues 1–21 (MNNKTSNGDITNDEPTVGSKR). Positions 146–180 (SDNLYQDKDDLEKQEKEREKKMANLLSKNVDIKEL) form a coiled coil. The disordered stretch occupies residues 408-437 (DPINNNNNNNNNNNNNNNNTTTTTSTTTTN). Residues 411-437 (NNNNNNNNNNNNNNNNTTTTTSTTTTN) are compositionally biased toward low complexity.

This sequence belongs to the methyltransferase superfamily. METL family.

Probable methyltransferase. The chain is O-methyltransferase 3 (omt3) from Dictyostelium discoideum (Social amoeba).